We begin with the raw amino-acid sequence, 446 residues long: Serum factor response D (446 aa).

The region spanning 1 to 61 is the MADS-box domain; sequence MGRKKIKIQR…PNAKEKYFQY (61 aa). 3 disordered regions span residues 95 to 195, 210 to 296, and 319 to 432; these read KKEK…FNSS, TQEN…CQQV, and CSSP…SNLN. Positions 112–121 are enriched in basic and acidic residues; it reads SHSEEEDHKS. Residues 133 to 142 are compositionally biased toward basic residues; the sequence is HHNHHHHHHQ. Low complexity-rich tracts occupy residues 143-195 and 216-282; these read YNNN…FNSS and HYNN…NNNN. Polar residues predominate over residues 322–355; the sequence is PEDTSPMTSPRTPPFSSTNTNTLQTSPNSQQKSK. Over residues 365–432 the composition is skewed to low complexity; the sequence is NNNQNNNNQN…SPTSSSSNLN (68 aa).

Its subcellular location is the nucleus. This Dictyostelium discoideum (Social amoeba) protein is Serum factor response D (srfD).